A 416-amino-acid polypeptide reads, in one-letter code: Multifunctional CCA protein (416 aa).

Positions 8 and 11 each coordinate ATP. Gly-8 and Arg-11 together coordinate CTP. Positions 21 and 23 each coordinate Mg(2+). ATP contacts are provided by Arg-91, Arg-137, and Arg-140. CTP is bound by residues Arg-91, Arg-137, and Arg-140. The HD domain occupies 228 to 329 (TGVHTLMVLA…VKIFDKADFW (102 aa)).

Belongs to the tRNA nucleotidyltransferase/poly(A) polymerase family. Bacterial CCA-adding enzyme type 1 subfamily. In terms of assembly, monomer. Can also form homodimers and oligomers. Mg(2+) is required as a cofactor. Requires Ni(2+) as cofactor.

The enzyme catalyses a tRNA precursor + 2 CTP + ATP = a tRNA with a 3' CCA end + 3 diphosphate. It catalyses the reaction a tRNA with a 3' CCA end + 2 CTP + ATP = a tRNA with a 3' CCACCA end + 3 diphosphate. Its function is as follows. Catalyzes the addition and repair of the essential 3'-terminal CCA sequence in tRNAs without using a nucleic acid template. Adds these three nucleotides in the order of C, C, and A to the tRNA nucleotide-73, using CTP and ATP as substrates and producing inorganic pyrophosphate. tRNA 3'-terminal CCA addition is required both for tRNA processing and repair. Also involved in tRNA surveillance by mediating tandem CCA addition to generate a CCACCA at the 3' terminus of unstable tRNAs. While stable tRNAs receive only 3'-terminal CCA, unstable tRNAs are marked with CCACCA and rapidly degraded. The sequence is that of Multifunctional CCA protein from Shewanella baltica (strain OS195).